Here is a 422-residue protein sequence, read N- to C-terminus: Adenylosuccinate synthetase (422 aa).

GTP contacts are provided by residues 11–17 and 39–41; these read GDEGKGK and GHT. Asp12 (proton acceptor) is an active-site residue. Positions 12 and 39 each coordinate Mg(2+). IMP-binding positions include 12-15, 37-40, Thr129, Arg143, Asn219, Thr234, and Arg298; these read DEGK and NAGH. His40 serves as the catalytic Proton donor. 294 to 300 provides a ligand contact to substrate; sequence VTTGRRR. GTP-binding positions include Arg300, 326–328, and 409–411; these read KLD and GTG.

Belongs to the adenylosuccinate synthetase family. Homodimer. Mg(2+) serves as cofactor.

The protein resides in the cytoplasm. It catalyses the reaction IMP + L-aspartate + GTP = N(6)-(1,2-dicarboxyethyl)-AMP + GDP + phosphate + 2 H(+). It participates in purine metabolism; AMP biosynthesis via de novo pathway; AMP from IMP: step 1/2. In terms of biological role, plays an important role in the de novo pathway and in the salvage pathway of purine nucleotide biosynthesis. Catalyzes the first committed step in the biosynthesis of AMP from IMP. In Ajellomyces capsulatus (strain NAm1 / WU24) (Darling's disease fungus), this protein is Adenylosuccinate synthetase.